A 139-amino-acid polypeptide reads, in one-letter code: Large ribosomal subunit protein uL16 (139 aa).

A compositionally biased stretch (basic residues) spans 1-11 (MLQPKRTKYRK). The interval 1–30 (MLQPKRTKYRKPFLQSHDKRKAHKGNKVSF) is disordered.

The protein belongs to the universal ribosomal protein uL16 family. As to quaternary structure, part of the 50S ribosomal subunit.

In terms of biological role, binds 23S rRNA and is also seen to make contacts with the A and possibly P site tRNAs. This is Large ribosomal subunit protein uL16 from Mycoplasmopsis synoviae (strain 53) (Mycoplasma synoviae).